Here is a 272-residue protein sequence, read N- to C-terminus: Eukaryotic translation initiation factor 3 subunit G (272 aa).

Disordered stretches follow at residues 1–28 (MPALDEIKSSWADEVELDSGSLPPPTEI) and 143–187 (AGKA…RGRD). Positions 190–268 (TAIRISNLSE…LILNVEWSKP (79 aa)) constitute an RRM domain.

The protein belongs to the eIF-3 subunit G family. As to quaternary structure, component of the eukaryotic translation initiation factor 3 (eIF-3) complex.

Its subcellular location is the cytoplasm. Its function is as follows. RNA-binding component of the eukaryotic translation initiation factor 3 (eIF-3) complex, which is involved in protein synthesis of a specialized repertoire of mRNAs and, together with other initiation factors, stimulates binding of mRNA and methionyl-tRNAi to the 40S ribosome. The eIF-3 complex specifically targets and initiates translation of a subset of mRNAs involved in cell proliferation. This subunit can bind 18S rRNA. The polypeptide is Eukaryotic translation initiation factor 3 subunit G (Culex quinquefasciatus (Southern house mosquito)).